Consider the following 193-residue polypeptide: L-2,4-diaminobutyric acid acetyltransferase (193 aa).

The segment at 1–22 (MSLQTLSTPTAEPVEEPRPVEA) is disordered. An N-acetyltransferase domain is found at 33 to 185 (ALLRAPQLGD…EHAPEDLYRI (153 aa)).

This sequence belongs to the acetyltransferase family. EctA subfamily.

The enzyme catalyses L-2,4-diaminobutanoate + acetyl-CoA = (2S)-4-acetamido-2-aminobutanoate + CoA + H(+). It participates in amine and polyamine biosynthesis; ectoine biosynthesis; L-ectoine from L-aspartate 4-semialdehyde: step 2/3. In terms of biological role, catalyzes the acetylation of L-2,4-diaminobutyrate (DABA) to gamma-N-acetyl-alpha,gamma-diaminobutyric acid (ADABA) with acetyl coenzyme A. This is L-2,4-diaminobutyric acid acetyltransferase (ectA) from Nocardia farcinica (strain IFM 10152).